A 176-amino-acid chain; its full sequence is NAD(P)H-quinone oxidoreductase subunit 6, chloroplastic (176 aa).

The next 5 membrane-spanning stretches (helical) occupy residues 10 to 30 (ILLVFLGSGLILGGLGVVLFT), 32 to 52 (PIYSAFSLGLVFVCISLFYIP), 61 to 81 (AQLLIYVGAVNVLIVFAVMFM), 90 to 112 (FHLWTVGDGITSLVCTSILFSLI), and 152 to 172 (FYLPFELTSIILLVALIGAIA).

The protein belongs to the complex I subunit 6 family. In terms of assembly, NDH is composed of at least 16 different subunits, 5 of which are encoded in the nucleus.

It localises to the plastid. It is found in the chloroplast thylakoid membrane. It catalyses the reaction a plastoquinone + NADH + (n+1) H(+)(in) = a plastoquinol + NAD(+) + n H(+)(out). The enzyme catalyses a plastoquinone + NADPH + (n+1) H(+)(in) = a plastoquinol + NADP(+) + n H(+)(out). In terms of biological role, NDH shuttles electrons from NAD(P)H:plastoquinone, via FMN and iron-sulfur (Fe-S) centers, to quinones in the photosynthetic chain and possibly in a chloroplast respiratory chain. The immediate electron acceptor for the enzyme in this species is believed to be plastoquinone. Couples the redox reaction to proton translocation, and thus conserves the redox energy in a proton gradient. The sequence is that of NAD(P)H-quinone oxidoreductase subunit 6, chloroplastic (ndhG) from Ceratophyllum demersum (Rigid hornwort).